The following is a 192-amino-acid chain: Interleukin-18 (192 aa).

The propeptide occupies 1-35 (MAAEPVEDNCISFVEMKFINNTLYFVAENGDLESD).

It belongs to the IL-1 family. In terms of assembly, forms a ternary complex with ligand-binding receptor subunit IL18R1 and signaling receptor subunit IL18RAP at the plasma membrane. Mature IL18 first binds to IL18R1 forming a low affinity binary complex, which then interacts with IL18RAP to form a high affinity ternary complex that signals inside the cell. Interacts with cargo receptor TMED10; the interaction mediates the translocation from the cytoplasm into the ERGIC (endoplasmic reticulum-Golgi intermediate compartment) and thereby secretion. Post-translationally, the pro-IL-18 precursor is processed by CASP1, CASP4 or CASP5 to yield its mature, active form. The pro-IL-18 precursor features autoinhibitory interactions between the propeptide and the post-cleavage-site region, preventing recognition by the IL18R1 receptor. Processing by CASP1, CASP4 or CASP5 induces conformational changes to generate critical receptor-binding sites. The mature form is then secreted and released in the extracellular milieu by passing through the gasdermin-D (GSDMD) pore. In contrast, cleavage by CASP3 inactivates IL18.

The protein resides in the cytoplasm. Its subcellular location is the cytosol. It is found in the secreted. In terms of biological role, pro-inflammatory cytokine primarily involved in epithelial barrier repair, polarized T-helper 1 (Th1) cell and natural killer (NK) cell immune responses. Upon binding to IL18R1 and IL18RAP, forms a signaling ternary complex which activates NF-kappa-B, triggering synthesis of inflammatory mediators. Synergizes with IL12/interleukin-12 to induce IFNG synthesis from T-helper 1 (Th1) cells and natural killer (NK) cells. Involved in transduction of inflammation downstream of pyroptosis: its mature form is specifically released in the extracellular milieu by passing through the gasdermin-D (GSDMD) pore. The chain is Interleukin-18 (IL18) from Capra hircus (Goat).